A 144-amino-acid chain; its full sequence is Large ribosomal subunit protein uL13 (144 aa).

The protein belongs to the universal ribosomal protein uL13 family. Part of the 50S ribosomal subunit.

Functionally, this protein is one of the early assembly proteins of the 50S ribosomal subunit, although it is not seen to bind rRNA by itself. It is important during the early stages of 50S assembly. The polypeptide is Large ribosomal subunit protein uL13 (Chloroflexus aurantiacus (strain ATCC 29366 / DSM 635 / J-10-fl)).